The following is a 172-amino-acid chain: Large ribosomal subunit protein uL5 (172 aa).

It belongs to the universal ribosomal protein uL5 family. In terms of assembly, part of the 50S ribosomal subunit; contacts the 5S rRNA and probably tRNA. Forms a bridge to the 30S subunit in the 70S ribosome.

This is one of the proteins that bind and probably mediate the attachment of the 5S RNA into the large ribosomal subunit, where it forms part of the central protuberance. In the 70S ribosome it contacts protein S13 of the 30S subunit (bridge B1b), connecting the 2 subunits; this bridge is implicated in subunit movement. May contact the P site tRNA; the 5S rRNA and some of its associated proteins might help stabilize positioning of ribosome-bound tRNAs. The sequence is that of Large ribosomal subunit protein uL5 from Haloferax mediterranei (strain ATCC 33500 / DSM 1411 / JCM 8866 / NBRC 14739 / NCIMB 2177 / R-4) (Halobacterium mediterranei).